Here is an 89-residue protein sequence, read N- to C-terminus: Small ribosomal subunit protein uS15 (89 aa).

The segment covering 1–21 has biased composition (basic and acidic residues); it reads MSLHQERKSELVSKFRTHESD. The disordered stretch occupies residues 1–25; sequence MSLHQERKSELVSKFRTHESDTGSP.

It belongs to the universal ribosomal protein uS15 family. Part of the 30S ribosomal subunit. Forms a bridge to the 50S subunit in the 70S ribosome, contacting the 23S rRNA.

One of the primary rRNA binding proteins, it binds directly to 16S rRNA where it helps nucleate assembly of the platform of the 30S subunit by binding and bridging several RNA helices of the 16S rRNA. Functionally, forms an intersubunit bridge (bridge B4) with the 23S rRNA of the 50S subunit in the ribosome. This Myxococcus xanthus (strain DK1622) protein is Small ribosomal subunit protein uS15.